Reading from the N-terminus, the 255-residue chain is Type III pantothenate kinase (255 aa).

12-19 (DIGNSYTK) contributes to the ATP binding site. 109–112 (GDDL) provides a ligand contact to substrate. Asp-111 serves as the catalytic Proton acceptor. An ATP-binding site is contributed by Thr-133. A substrate-binding site is contributed by Thr-185.

The protein belongs to the type III pantothenate kinase family. In terms of assembly, homodimer. NH4(+) is required as a cofactor. It depends on K(+) as a cofactor.

It localises to the cytoplasm. The enzyme catalyses (R)-pantothenate + ATP = (R)-4'-phosphopantothenate + ADP + H(+). It participates in cofactor biosynthesis; coenzyme A biosynthesis; CoA from (R)-pantothenate: step 1/5. Functionally, catalyzes the phosphorylation of pantothenate (Pan), the first step in CoA biosynthesis. This chain is Type III pantothenate kinase, found in Malacoplasma penetrans (strain HF-2) (Mycoplasma penetrans).